We begin with the raw amino-acid sequence, 236 residues long: EF-hand domain-containing protein D1 (236 aa).

The segment at Met-1–Ala-48 is disordered. Over residues Gly-28–Trp-42 the composition is skewed to pro residues. EF-hand domains follow at residues Arg-87–Pro-122 and Gln-123–Gly-158. Residues Asp-100, Asp-104, Glu-111, Asp-136, Asp-138, Asp-140, Lys-142, and Glu-147 each contribute to the Ca(2+) site.

It localises to the mitochondrion inner membrane. Functionally, acts as a calcium sensor for mitochondrial flash (mitoflash) activation, an event characterized by stochastic bursts of superoxide production. May play a role in neuronal differentiation. In Bos taurus (Bovine), this protein is EF-hand domain-containing protein D1 (EFHD1).